Reading from the N-terminus, the 177-residue chain is MMAKPKKTIPAKLSDERIVIYDKDGISRLNEKRYGELHENFLSLSYVEALYLVAKDWVLIRDKKNKILSFEELHEIAHVIDKKLCIRYLVYKDLRNRGYTVRTGLKYGSDFRLYERSNIDEVHSKYLVKVFSEEIPCEISEITGFVRVAHSVRKELVIAIVDADGSVVYYNMGYLKL.

Residues Y114, H123, and K154 contribute to the active site.

Belongs to the tRNA-intron endonuclease family. Archaeal short subfamily. Homotetramer; although the tetramer contains four active sites, only two participate in the cleavage. Therefore, it should be considered as a dimer of dimers.

It catalyses the reaction pretRNA = a 3'-half-tRNA molecule with a 5'-OH end + a 5'-half-tRNA molecule with a 2',3'-cyclic phosphate end + an intron with a 2',3'-cyclic phosphate and a 5'-hydroxyl terminus.. Its function is as follows. Endonuclease that removes tRNA introns. Cleaves pre-tRNA at the 5'- and 3'-splice sites to release the intron. The products are an intron and two tRNA half-molecules bearing 2',3' cyclic phosphate and 5'-OH termini. Recognizes a pseudosymmetric substrate in which 2 bulged loops of 3 bases are separated by a stem of 4 bp. The sequence is that of tRNA-splicing endonuclease from Methanococcus vannielii (strain ATCC 35089 / DSM 1224 / JCM 13029 / OCM 148 / SB).